The sequence spans 869 residues: Phenylalanine--tRNA ligase beta subunit (869 aa).

Residues 41–162 (SQVTGPIVVG…QYGFSEAEYE (122 aa)) form the tRNA-binding domain. Positions 443 to 519 (PRAKAIHFKA…RLVGYDQIPI (77 aa)) constitute a B5 domain. Mg(2+) contacts are provided by D497, D503, E506, and E507. An FDX-ACB domain is found at 776-868 (STFPPVKQDL…EAAEIGAQLR (93 aa)).

It belongs to the phenylalanyl-tRNA synthetase beta subunit family. Type 1 subfamily. As to quaternary structure, tetramer of two alpha and two beta subunits. The cofactor is Mg(2+).

The protein localises to the cytoplasm. It catalyses the reaction tRNA(Phe) + L-phenylalanine + ATP = L-phenylalanyl-tRNA(Phe) + AMP + diphosphate + H(+). In Bifidobacterium longum (strain NCC 2705), this protein is Phenylalanine--tRNA ligase beta subunit.